The following is a 307-amino-acid chain: UDP-N-acetylenolpyruvoylglucosamine reductase (307 aa).

Positions 29–197 (RVGGPAEWFA…LSARFRLDPG (169 aa)) constitute an FAD-binding PCMH-type domain. Residue Arg176 is part of the active site. The active-site Proton donor is the Ser227. Glu297 is a catalytic residue.

It belongs to the MurB family. It depends on FAD as a cofactor.

Its subcellular location is the cytoplasm. It carries out the reaction UDP-N-acetyl-alpha-D-muramate + NADP(+) = UDP-N-acetyl-3-O-(1-carboxyvinyl)-alpha-D-glucosamine + NADPH + H(+). Its pathway is cell wall biogenesis; peptidoglycan biosynthesis. In terms of biological role, cell wall formation. The chain is UDP-N-acetylenolpyruvoylglucosamine reductase from Prochlorococcus marinus (strain MIT 9313).